The primary structure comprises 216 residues: MKFFADTAEIDAIQELAATGLLDGVTTNPSLIAKSGRDFKEVTREICAIVDGPVSAEVVALDHETMMKEAEILRKIADNVCIKVPLTIDGLKTCKKLTGDGTMVNVTLCFSATQALLAAKAGATFVSPFVGRHDDNGFDGMQLIADIRLIYDNYDFGTEILVASVRHGIHVLEAAKIGADVMTAPPAVIKGLFKHVLTEKGIEGFLADWAKTGQSI.

The Schiff-base intermediate with substrate role is filled by Lys-83.

The protein belongs to the transaldolase family. Type 3B subfamily.

The protein localises to the cytoplasm. It carries out the reaction D-sedoheptulose 7-phosphate + D-glyceraldehyde 3-phosphate = D-erythrose 4-phosphate + beta-D-fructose 6-phosphate. It functions in the pathway carbohydrate degradation; pentose phosphate pathway; D-glyceraldehyde 3-phosphate and beta-D-fructose 6-phosphate from D-ribose 5-phosphate and D-xylulose 5-phosphate (non-oxidative stage): step 2/3. Functionally, transaldolase is important for the balance of metabolites in the pentose-phosphate pathway. This Sphingopyxis alaskensis (strain DSM 13593 / LMG 18877 / RB2256) (Sphingomonas alaskensis) protein is Probable transaldolase.